The following is a 688-amino-acid chain: Glycine--tRNA ligase beta subunit (688 aa).

Belongs to the class-II aminoacyl-tRNA synthetase family. In terms of assembly, tetramer of two alpha and two beta subunits.

The protein resides in the cytoplasm. The enzyme catalyses tRNA(Gly) + glycine + ATP = glycyl-tRNA(Gly) + AMP + diphosphate. The protein is Glycine--tRNA ligase beta subunit of Syntrophotalea carbinolica (strain DSM 2380 / NBRC 103641 / GraBd1) (Pelobacter carbinolicus).